Here is a 196-residue protein sequence, read N- to C-terminus: Imidazole glycerol phosphate synthase subunit HisH (196 aa).

A Glutamine amidotransferase type-1 domain is found at 2–196; it reads KVAVIKYNAG…ERIIKNFLEL (195 aa). Cysteine 77 functions as the Nucleophile in the catalytic mechanism. Residues histidine 178 and glutamate 180 contribute to the active site.

In terms of assembly, heterodimer of HisH and HisF.

The protein localises to the cytoplasm. It catalyses the reaction 5-[(5-phospho-1-deoxy-D-ribulos-1-ylimino)methylamino]-1-(5-phospho-beta-D-ribosyl)imidazole-4-carboxamide + L-glutamine = D-erythro-1-(imidazol-4-yl)glycerol 3-phosphate + 5-amino-1-(5-phospho-beta-D-ribosyl)imidazole-4-carboxamide + L-glutamate + H(+). It carries out the reaction L-glutamine + H2O = L-glutamate + NH4(+). Its pathway is amino-acid biosynthesis; L-histidine biosynthesis; L-histidine from 5-phospho-alpha-D-ribose 1-diphosphate: step 5/9. IGPS catalyzes the conversion of PRFAR and glutamine to IGP, AICAR and glutamate. The HisH subunit catalyzes the hydrolysis of glutamine to glutamate and ammonia as part of the synthesis of IGP and AICAR. The resulting ammonia molecule is channeled to the active site of HisF. The sequence is that of Imidazole glycerol phosphate synthase subunit HisH from Bacteroides fragilis (strain YCH46).